The following is a 449-amino-acid chain: HSPB1-associated protein 1 homolog (449 aa).

The 165-residue stretch at 102-266 folds into the JmjC domain; it reads WAYADYKYIA…DEARVAEALT (165 aa). Residues 385–395 are compositionally biased toward basic and acidic residues; it reads DQDKLRSDNKL. The segment at 385 to 416 is disordered; sequence DQDKLRSDNKLGQRSGQSVLQDTENPGGSGEM. The segment covering 396 to 410 has biased composition (polar residues); the sequence is GQRSGQSVLQDTENP.

It localises to the cytoplasm. May play a role in cellular stress response. The chain is HSPB1-associated protein 1 homolog (hspbap1) from Danio rerio (Zebrafish).